The sequence spans 152 residues: Ubiquitin-conjugating enzyme E2 N (152 aa).

Residues 3-149 enclose the UBC core domain; sequence GLPRRIIKET…ARAWTRLYAM (147 aa). Lys-82 is subject to N6-acetyllysine. The Glycyl thioester intermediate role is filled by Cys-87. Residue Lys-92 forms a Glycyl lysine isopeptide (Lys-Gly) (interchain with G-Cter in ISG15) linkage.

The protein belongs to the ubiquitin-conjugating enzyme family. In terms of assembly, heterodimer with UBE2V2. Interacts (UBE2V2-UBE2N heterodimer) with the E3 ligase STUB1 (via the U-box domain); the complex has a specific 'Lys-63'-linked polyubiquitination activity. Interacts with RNF8 and RNF168. Interacts with RNF11. Interacts with the E3 ligases, HLTF and SHPRH; the interactions promote the 'Lys-63'-linked polyubiquitination of PCNA upon genotoxic stress and lead to DNA repair. Interacts with ARIH2 (via RING-type 2). Interacts with OTUB1; leading to inhibit E2-conjugating activity. Interacts with RIGI and RNF135; involved in RIGI ubiquitination and activation. Conjugation to ISG15 impairs formation of the thioester bond with ubiquitin but not interaction with UBE2V2.

It catalyses the reaction S-ubiquitinyl-[E1 ubiquitin-activating enzyme]-L-cysteine + [E2 ubiquitin-conjugating enzyme]-L-cysteine = [E1 ubiquitin-activating enzyme]-L-cysteine + S-ubiquitinyl-[E2 ubiquitin-conjugating enzyme]-L-cysteine.. It participates in protein modification; protein ubiquitination. Its activity is regulated as follows. Activity is inhibited by binding to OTUB1, which prevents 'Lys-63'-linked polyubiquitination. Functionally, the UBE2V1-UBE2N and UBE2V2-UBE2N heterodimers catalyze the synthesis of non-canonical 'Lys-63'-linked polyubiquitin chains. This type of polyubiquitination does not lead to protein degradation by the proteasome. Mediates transcriptional activation of target genes. Plays a role in the control of progress through the cell cycle and differentiation. Plays a role in the error-free DNA repair pathway and contributes to the survival of cells after DNA damage. Acts together with the E3 ligases, HLTF and SHPRH, in the 'Lys-63'-linked poly-ubiquitination of PCNA upon genotoxic stress, which is required for DNA repair. Appears to act together with E3 ligase RNF5 in the 'Lys-63'-linked polyubiquitination of JKAMP thereby regulating JKAMP function by decreasing its association with components of the proteasome and ERAD. Promotes TRIM5 capsid-specific restriction activity and the UBE2V1-UBE2N heterodimer acts in concert with TRIM5 to generate 'Lys-63'-linked polyubiquitin chains which activate the MAP3K7/TAK1 complex which in turn results in the induction and expression of NF-kappa-B and MAPK-responsive inflammatory genes. Together with RNF135 and UB2V1, catalyzes the viral RNA-dependent 'Lys-63'-linked polyubiquitination of RIGI to activate the downstream signaling pathway that leads to interferon beta production. UBE2V1-UBE2N together with TRAF3IP2 E3 ubiquitin ligase mediate 'Lys-63'-linked polyubiquitination of TRAF6, a component of IL17A-mediated signaling pathway. The protein is Ubiquitin-conjugating enzyme E2 N (UBE2N) of Macaca fascicularis (Crab-eating macaque).